Consider the following 368-residue polypeptide: MKAVLGLEDGTVIKGTGFGAEGTACGELVFTTQFTGYEEALTDPSYKGQILMFTYPLIGNYGVSGERFQSDNIHAEGLVVREACKKPYHYKSTRSIHKFLEDEGKPGIEGVDTRMLTIGAREHGTMRAALITGSDDGEEAVDMARNFPQVTDEELIARVTCKEPRFIPGAAGAWKGSGKPKHAVVVDLGIKRNIINNLHKRGIDLTLVPATTKPEEIAGYEPDMLFISNGPGDPEKATDAINAVKAFAGTIPVAGICFGHQIISLAMGARTYKLKFGHRGGNQPVKDLIENKIFISSQNHGYAVDADSLEGTGLYVKYLNANDKTVEGVSHKDLDIFSVQFHPEAQAGPLDTEETFFGKVVKVLGGGL.

A CPSase region spans residues 1-178; sequence MKAVLGLEDG…GAAGAWKGSG (178 aa). L-glutamine is bound by residues Ser45, Gly230, and Gly232. The Glutamine amidotransferase type-1 domain occupies 182 to 368; sequence HAVVVDLGIK…KVVKVLGGGL (187 aa). Cys257 acts as the Nucleophile in catalysis. Residues Phe258, Gln261, Asn299, Gly301, and Tyr302 each coordinate L-glutamine. Residues His342 and Glu344 contribute to the active site.

Belongs to the CarA family. Composed of two chains; the small (or glutamine) chain promotes the hydrolysis of glutamine to ammonia, which is used by the large (or ammonia) chain to synthesize carbamoyl phosphate. Tetramer of heterodimers (alpha,beta)4.

It carries out the reaction hydrogencarbonate + L-glutamine + 2 ATP + H2O = carbamoyl phosphate + L-glutamate + 2 ADP + phosphate + 2 H(+). It catalyses the reaction L-glutamine + H2O = L-glutamate + NH4(+). It participates in amino-acid biosynthesis; L-arginine biosynthesis; carbamoyl phosphate from bicarbonate: step 1/1. It functions in the pathway pyrimidine metabolism; UMP biosynthesis via de novo pathway; (S)-dihydroorotate from bicarbonate: step 1/3. Small subunit of the glutamine-dependent carbamoyl phosphate synthetase (CPSase). CPSase catalyzes the formation of carbamoyl phosphate from the ammonia moiety of glutamine, carbonate, and phosphate donated by ATP, constituting the first step of 2 biosynthetic pathways, one leading to arginine and/or urea and the other to pyrimidine nucleotides. The small subunit (glutamine amidotransferase) binds and cleaves glutamine to supply the large subunit with the substrate ammonia. This chain is Carbamoyl phosphate synthase small chain, found in Methanosarcina mazei (strain ATCC BAA-159 / DSM 3647 / Goe1 / Go1 / JCM 11833 / OCM 88) (Methanosarcina frisia).